The sequence spans 407 residues: Aminoacylase-1 (407 aa).

N-acetylalanine is present on Ala-2. His-80 lines the Zn(2+) pocket. Asp-82 is an active-site residue. Asp-113 lines the Zn(2+) pocket. Glu-147 serves as the catalytic Proton acceptor. 3 residues coordinate Zn(2+): Glu-148, Glu-175, and His-372.

It belongs to the peptidase M20A family. In terms of assembly, homodimer. Interacts with SPHK1. The cofactor is Zn(2+).

The protein resides in the cytoplasm. It catalyses the reaction an N-acyl-L-amino acid + H2O = an L-alpha-amino acid + a carboxylate. The enzyme catalyses N-acetyl-L-methionine + H2O = L-methionine + acetate. It carries out the reaction N-acetyl-L-glutamine + H2O = L-glutamine + acetate. Its function is as follows. Catalyzes the hydrolysis of N-acetylated amino acids to acetate and free amino acids. This Sus scrofa (Pig) protein is Aminoacylase-1 (ACY1).